We begin with the raw amino-acid sequence, 242 residues long: Floral homeotic protein AGAMOUS (242 aa).

The region spanning 19–73 (RGKIEIKRIENTTNRQVTFCKRRNGLLKKAYELSVLCDAEVALIVFSSRGRLYEY) is the MADS-box domain. Residues 103–193 (AQYYQQEASK…RAKIAETERS (91 aa)) form the K-box domain.

As to expression, expressed exclusively in stamens and carpels.

It is found in the nucleus. Probable transcription factor involved in regulating genes that determines stamen and carpel development in wild-type flowers. In Petunia hybrida (Petunia), this protein is Floral homeotic protein AGAMOUS (AG1).